The chain runs to 196 residues: Ribonuclease HII (196 aa).

One can recognise an RNase H type-2 domain in the interval 9–196 (SLIAGVDEVG…APVKRAIGLK (188 aa)). A divalent metal cation contacts are provided by aspartate 15, glutamate 16, and aspartate 107.

The protein belongs to the RNase HII family. It depends on Mn(2+) as a cofactor. Requires Mg(2+) as cofactor.

Its subcellular location is the cytoplasm. It carries out the reaction Endonucleolytic cleavage to 5'-phosphomonoester.. In terms of biological role, endonuclease that specifically degrades the RNA of RNA-DNA hybrids. This is Ribonuclease HII from Photorhabdus laumondii subsp. laumondii (strain DSM 15139 / CIP 105565 / TT01) (Photorhabdus luminescens subsp. laumondii).